Reading from the N-terminus, the 347-residue chain is Ion-translocating oxidoreductase complex subunit D (347 aa).

The next 4 membrane-spanning stretches (helical) occupy residues 15–35 (IMFL…YFFG), 36–56 (IGTL…EIII), 84–104 (IPPL…IVVA), and 114–134 (NIFN…PVYM). The residue at position 182 (threonine 182) is an FMN phosphoryl threonine. A run of 5 helical transmembrane segments spans residues 217–237 (CINI…IICW), 239–259 (IPIS…FYSK), 261–281 (LFMS…AFFI), 289–309 (ACNN…VWII), and 315–335 (YPDA…LVDY).

The protein belongs to the NqrB/RnfD family. As to quaternary structure, the complex is composed of six subunits: RnfA, RnfB, RnfC, RnfD, RnfE and RnfG. FMN is required as a cofactor.

The protein localises to the cell inner membrane. Its function is as follows. Part of a membrane-bound complex that couples electron transfer with translocation of ions across the membrane. The polypeptide is Ion-translocating oxidoreductase complex subunit D (Buchnera aphidicola subsp. Acyrthosiphon pisum (strain 5A)).